A 231-amino-acid polypeptide reads, in one-letter code: GFP-like fluorescent chromoprotein FP538 (231 aa).

Phe65 bears the Phenylalanine amide; atypical mark. A cross-link (2-tetrahydro-2-pyridyl-5-imidazolinone (Lys-Gly)) is located at residues 66–68 (KYG). 2,3-didehydrotyrosine is present on Tyr67.

It belongs to the GFP family. Homotetramer. Post-translationally, contains a chromophore consisting of modified amino acid residues. The chromophore is formed by autocatalytic backbone condensation between Xaa-N and Gly-(N+2), and oxidation of Tyr-(N+1) to didehydrotyrosine. In addition, the residue N lysine undergoes cyclization. The alpha-amino nitrogen is replaced by the epsilon-amino nitrogen, the peptide chain is broken, residue N-1 is released as an amide, and a double bond is formed between the alpha-carbon and the nitrogen so that a tetrahydropyridine ring results. Maturation of the chromophore requires nothing other than molecular oxygen. Tentacle and oral disk.

Functionally, pigment protein that is yellow in color. This is GFP-like fluorescent chromoprotein FP538 from Zoanthus sp. (Green polyp).